A 424-amino-acid chain; its full sequence is Probable serine/threonine-protein kinase PBL15 (424 aa).

The Protein kinase domain occupies 99 to 380; sequence FSGNYLLGEG…AVVEALESLI (282 aa). Residues 105 to 113 and Lys134 contribute to the ATP site; that span reads LGEGGFGKV. Tyr179 is subject to Phosphotyrosine. Asp229 (proton acceptor) is an active-site residue. Position 233 is a phosphoserine (Ser233). 2 positions are modified to phosphothreonine: Thr264 and Thr269. Tyr277 carries the phosphotyrosine modification. The tract at residues 390–424 is disordered; it reads GHWPLSPKSQGGKVSPKVRGDHRSGRKSAPGSLRS.

It belongs to the protein kinase superfamily. Ser/Thr protein kinase family. Interacts with the Xanthomonas campestris effector XopAC/AvrAC.

The protein localises to the cell membrane. It catalyses the reaction L-seryl-[protein] + ATP = O-phospho-L-seryl-[protein] + ADP + H(+). The enzyme catalyses L-threonyl-[protein] + ATP = O-phospho-L-threonyl-[protein] + ADP + H(+). Its function is as follows. May be involved in plant defense signaling. In Arabidopsis thaliana (Mouse-ear cress), this protein is Probable serine/threonine-protein kinase PBL15.